Consider the following 400-residue polypeptide: U-box domain-containing protein 37 (400 aa).

The stretch at 229 to 298 (KEWESAYLEE…RKAKEERDLL (70 aa)) forms a coiled coil. The U-box domain occupies 324–398 (EAPQYFICPI…QEWLHASSSF (75 aa)).

It carries out the reaction S-ubiquitinyl-[E2 ubiquitin-conjugating enzyme]-L-cysteine + [acceptor protein]-L-lysine = [E2 ubiquitin-conjugating enzyme]-L-cysteine + N(6)-ubiquitinyl-[acceptor protein]-L-lysine.. It functions in the pathway protein modification; protein ubiquitination. In terms of biological role, functions as an E3 ubiquitin ligase. The protein is U-box domain-containing protein 37 (PUB37) of Arabidopsis thaliana (Mouse-ear cress).